Reading from the N-terminus, the 310-residue chain is Nucleotide-binding protein MAP_1147 (310 aa).

30–37 is a binding site for ATP; that stretch reads GLSGAGRG. GTP is bound at residue 81 to 84; the sequence is DVRS.

It belongs to the RapZ-like family.

In terms of biological role, displays ATPase and GTPase activities. This Mycolicibacterium paratuberculosis (strain ATCC BAA-968 / K-10) (Mycobacterium paratuberculosis) protein is Nucleotide-binding protein MAP_1147.